A 362-amino-acid polypeptide reads, in one-letter code: MLRGVVGAFLVSLTVAGSYAVASHKTVTLSVDGAPMTVTTMKSRVIDIVEENGFEVSDRDDLFPAATETVHQSDTIVLRRSRPLEVSLDGEGTKQVWTTASTVDEALAQLRMTDKAPAAASRGSRVPLAGMALPVVSPKTVQIDDGGKVSTVHLAAPNVAGLLEAAGVPLEQNDKVVPAASSPVVDGMQIQVTRMRIEKVTERVPLAPGNERIEDPTMNMSRQVVEDPGAPGLQDVTFAIAKVNGVETGRLPVANQVIEPARNGVLRVGAKPGTEVPPVSNGHTWDALAQCEAGGNWAINTGNGFYGGVQFDQNTWERNGGLRYAPRADLATREEQIAIATVTQSRQGWGAWPVCSGRIGAR.

A signal peptide spans 1 to 22 (MLRGVVGAFLVSLTVAGSYAVA). The region spanning 192–272 (VTRMRIEKVT…NGVLRVGAKP (81 aa)) is the G5 domain.

The protein belongs to the transglycosylase family. Rpf subfamily.

Its function is as follows. Factor that stimulates resuscitation of dormant cells. Has peptidoglycan (PG) hydrolytic activity. Active in the pM concentration range. Has little to no effect on actively-growing cells. PG fragments could either directly activate the resuscitation pathway of dormant bacteria or serve as a substrate for endogenous Rpf, resulting in low molecular weight products with resuscitation activity. This Mycolicibacterium smegmatis (strain ATCC 700084 / mc(2)155) (Mycobacterium smegmatis) protein is Resuscitation-promoting factor RpfB (rpfB).